The following is a 983-amino-acid chain: Poly [ADP-ribose] polymerase 1 (983 aa).

2 PARP-type zinc fingers span residues 8–91 (WRAE…ESGA) and 114–194 (YGIE…KKAL). Residues Cys20, Cys23, His52, Cys55, Cys126, Cys129, His156, and Cys159 each coordinate Zn(2+). Residues 197 to 246 (AKTETAEARQTNSRAGTKRKNDSVDNEKSKLAKSSFDMSTSGALQPCSKE) form a disordered region. A compositionally biased stretch (basic and acidic residues) spans 215-226 (RKNDSVDNEKSK). In terms of domain architecture, PADR1 zinc-binding spans 236-375 (TSGALQPCSK…SVKPKRILRP (140 aa)). Residues 301-345 (GPLALCPMCSGHLSFSGGLYRCHGYISEWSKCSHSTLDPDRIKGK) are zinc ribbon. The Zn(2+) site is built by Cys306, Cys309, Cys322, and Cys332. The disordered stretch occupies residues 369–397 (PKRILRPVLSGETSQGQGSKDATDSSRSE). Over residues 379-388 (GETSQGQGSK) the composition is skewed to polar residues. One can recognise a BRCT domain in the interval 394–484 (SRSERLADLK…RKLPFDKYKI (91 aa)). The WGR domain occupies 511-611 (HCHILEDGNS…TNFQKQPGKF (101 aa)). Positions 633-751 (SSNLAPSLIE…DIEIASRIVG (119 aa)) constitute a PARP alpha-helical domain. The 226-residue stretch at 758 to 983 (ESLDDKYKKL…LLKVRFKHKR (226 aa)) folds into the PARP catalytic domain.

Belongs to the ARTD/PARP family.

The protein localises to the nucleus. The catalysed reaction is NAD(+) + (ADP-D-ribosyl)n-acceptor = nicotinamide + (ADP-D-ribosyl)n+1-acceptor + H(+).. It carries out the reaction L-aspartyl-[protein] + NAD(+) = 4-O-(ADP-D-ribosyl)-L-aspartyl-[protein] + nicotinamide. It catalyses the reaction L-glutamyl-[protein] + NAD(+) = 5-O-(ADP-D-ribosyl)-L-glutamyl-[protein] + nicotinamide. Functionally, involved in the base excision repair (BER) pathway, by catalyzing the poly(ADP-ribosyl)ation of a limited number of acceptor proteins involved in chromatin architecture and in DNA metabolism. This modification follows DNA damages and appears as an obligatory step in a detection/signaling pathway leading to the reparation of DNA strand breaks. This Arabidopsis thaliana (Mouse-ear cress) protein is Poly [ADP-ribose] polymerase 1 (PARP1).